The chain runs to 468 residues: Acetyl-CoA decarbonylase/synthase complex subunit gamma 2 (468 aa).

One can recognise a 4Fe-4S domain in the interval 1-60 (MKINSPLEAYKYLPQTNCGECGEATCMAFASKLIDRSGKPTQCPPLVKEKKFAKKLAELE). The [4Fe-4S] cluster site is built by C18, C21, C26, and C43.

Heterodimer of delta and gamma chains. The ACDS complex is made up of alpha, epsilon, beta, gamma and delta chains with a probable stoichiometry of (alpha(2)epsilon(2))(4)-beta(8)-(gamma(1)delta(1))(8). The cofactor is corrinoid. [4Fe-4S] cluster is required as a cofactor.

It carries out the reaction 5,6,7,8-tetrahydrosarcinapterin + methyl-Co(III)-[corrinoid Fe-S protein] = 5-methyltetrahydrosarcinapterin + Co(I)-[corrinoid Fe-S protein] + H(+). The protein operates within one-carbon metabolism; methanogenesis from acetate. Its function is as follows. Part of a complex that catalyzes the reversible cleavage of acetyl-CoA, allowing growth on acetate as sole source of carbon and energy. The polypeptide is Acetyl-CoA decarbonylase/synthase complex subunit gamma 2 (Methanosarcina thermophila).